Here is a 614-residue protein sequence, read N- to C-terminus: Phosphomethylpyrimidine synthase (614 aa).

The segment covering 1 to 16 has biased composition (low complexity); the sequence is MNAQLSALQQQAQQLS. The segment at 1–36 is disordered; sequence MNAQLSALQQQAQQLSESVTRPIPGSRKIHVPGSRP. Residues asparagine 230, methionine 259, tyrosine 288, histidine 324, 344–346, 385–388, and glutamate 424 each bind substrate; these read SRG and DGLR. Residue histidine 428 participates in Zn(2+) binding. Tyrosine 451 is a substrate binding site. Residue histidine 492 coordinates Zn(2+). Residues cysteine 572, cysteine 575, and cysteine 580 each contribute to the [4Fe-4S] cluster site.

It belongs to the ThiC family. Homodimer. It depends on [4Fe-4S] cluster as a cofactor.

It carries out the reaction 5-amino-1-(5-phospho-beta-D-ribosyl)imidazole + S-adenosyl-L-methionine = 4-amino-2-methyl-5-(phosphooxymethyl)pyrimidine + CO + 5'-deoxyadenosine + formate + L-methionine + 3 H(+). It functions in the pathway cofactor biosynthesis; thiamine diphosphate biosynthesis. Its function is as follows. Catalyzes the synthesis of the hydroxymethylpyrimidine phosphate (HMP-P) moiety of thiamine from aminoimidazole ribotide (AIR) in a radical S-adenosyl-L-methionine (SAM)-dependent reaction. The chain is Phosphomethylpyrimidine synthase from Stenotrophomonas maltophilia (strain R551-3).